We begin with the raw amino-acid sequence, 644 residues long: Neurofilament medium polypeptide (644 aa).

A coil 1B region spans residues 1–33 (VKVELDKKVQSLQDEVAFLRTNHEEEVADLLAQ). One can recognise an IF rod domain in the interval 1–197 (VKVELDKKVQ…KLLEGEETRF (197 aa)). A Phosphoserine modification is found at Ser-11. Residues 34 to 50 (IQASHITVERKDYLKTD) form a linker 12 region. A coil 2A region spans residues 51–72 (ISSALKEIRSQLECHSDQNMHQ). Residues 73–76 (AEEW) are linker 2. The interval 77-197 (FKCRYAKLTE…KLLEGEETRF (121 aa)) is coil 2B. At Tyr-105 the chain carries Phosphotyrosine. Phosphoserine is present on residues Ser-131, Ser-203, and Ser-215. The interval 198 to 643 (STFSGSITGP…HAIVKEVTQS (446 aa)) is tail. O-linked (GlcNAc) threonine glycosylation occurs at Thr-217. Ser-253 and Ser-269 each carry phosphoserine. Positions 270 to 582 (VKEEEKEEEA…GGDRSEEKVV (313 aa)) are disordered. Residues 274-292 (EKEEEAEGKEEEQEAEEEV) show a composition bias toward acidic residues. A Phosphoserine modification is found at Ser-298. Over residues 308–328 (KEEEGEKEEEGQEEEEEEEDE) the composition is skewed to acidic residues. Positions 329 to 350 (GVKSDQAEEGGSEKEGSSKNEG) are enriched in basic and acidic residues. Phosphoserine is present on residues Ser-332, Ser-340, Ser-345, and Ser-346. Positions 351–368 (EQEEGETEAEGEVEEAEA) are enriched in acidic residues. Phosphothreonine is present on Thr-357. Basic and acidic residues predominate over residues 369–400 (KEEKKTEEKSEEVAAKEEPVTEAKVGKPEKAK). Phosphoserine is present on residues Ser-401, Ser-406, Ser-442, and Ser-465. Residues 422-470 (GEQKEEEEKVEEEKKKAAKESPKEEKVEKKEEKPKDVPKKKAESPVKEE) show a composition bias toward basic and acidic residues. Residues 474 to 483 (EAATITKPTK) are compositionally biased toward low complexity. Basic and acidic residues predominate over residues 485–508 (GLEKETKEGEKPLQQEKEKEKAGE). Residues Ser-512, Ser-550, and Ser-566 each carry the phosphoserine modification. The span at 545 to 557 (TKEKGSGREEEKG) shows a compositional bias: basic and acidic residues. A compositionally biased stretch (basic and acidic residues) spans 568-582 (ADEKKGGDRSEEKVV).

This sequence belongs to the intermediate filament family. Forms heterodimers with NEFL; which can further hetero-oligomerize (in vitro). Forms heterodimers with INA (in vitro). Post-translationally, there are a number of repeats of the tripeptide K-S-P, NFM is phosphorylated on a number of the serines in this motif. It is thought that phosphorylation of NFM results in the formation of interfilament cross bridges that are important in the maintenance of axonal caliber. In terms of processing, phosphorylation seems to play a major role in the functioning of the larger neurofilament polypeptides (NF-M and NF-H), the levels of phosphorylation being altered developmentally and coincidentally with a change in the neurofilament function. Phosphorylated in the head and rod regions by the PKC kinase PKN1, leading to the inhibition of polymerization.

The protein localises to the cytoplasm. The protein resides in the cytoskeleton. It localises to the cell projection. Its subcellular location is the axon. Its function is as follows. Neurofilaments usually contain three intermediate filament proteins: NEFL, NEFM, and NEFH which are involved in the maintenance of neuronal caliber. May additionally cooperate with the neuronal intermediate filament proteins PRPH and INA to form neuronal filamentous networks. In Oryctolagus cuniculus (Rabbit), this protein is Neurofilament medium polypeptide (NEFM).